A 917-amino-acid chain; its full sequence is MLX-interacting protein (917 aa).

Positions 1 to 72 are disordered; that stretch reads MAADVFMCSP…AGPGREEPPR (72 aa). Residue Ala2 is modified to N-acetylalanine. Phosphoserine occurs at positions 9, 33, and 39. Residues 27-37 are compositionally biased toward acidic residues; the sequence is PEDDDDSDTDE. Residues 47–57 are compositionally biased toward low complexity; it reads ATSARAHASAA. Positions 73-327 are required for cytoplasmic localization; that stretch reads RQQIIHSGHF…PLQPNLDFMD (255 aa). Residues 322–445 form a transactivation domain region; the sequence is NLDFMDTFEP…LLSPGPAPAP (124 aa). 2 disordered regions span residues 347–402 and 632–711; these read LPPP…CERT and SHST…TDPK. Over residues 378–388 the composition is skewed to polar residues; it reads LPNSLITSSAA. The segment covering 632 to 643 has biased composition (low complexity); the sequence is SHSTSSQPSPVS. A Phosphoserine modification is found at Ser667. Positions 670–685 are enriched in polar residues; it reads VPATGSSRDCPNSGQA. A compositionally biased stretch (low complexity) spans 686 to 704; the sequence is SPCPSEQSPSPQSPQNNCS. In terms of domain architecture, bHLH spans 717 to 767; sequence KNRQKHISAEQKRRFNIRMGFNTLNSLISNNSKQTSHAITLQKTMEYITKL. Residues 767–788 form a leucine-zipper region; sequence LQQERMQMQEEARRLREEIEEL. The mediates heterotypic interactions between MLXIP and MLX and is required for cytoplasmic localization stretch occupies residues 830–879; sequence WKFWIFSMIIKPLFESFKGMVSTSSLEEFHRTALSWLDQHCSLPVLRPMV. The tract at residues 897-917 is disordered; that stretch reads SQLPEQASEAVTRMGKRSGES.

Efficient DNA binding requires dimerization with another bHLH protein. Binds DNA as a homodimer or a heterodimer with MLX/TCFL4.

Its subcellular location is the cytoplasm. The protein resides in the nucleus. It localises to the mitochondrion outer membrane. Its function is as follows. Binds DNA as a heterodimer with MLX/TCFL4 and activates transcription. Binds to the canonical E box sequence 5'-CACGTG-3'. Plays a role in transcriptional activation of glycolytic target genes. Involved in glucose-responsive gene regulation. Regulates transcription in response to changes in cellular carbohydrate abundance such as occurs during fasting to feeding metabolic transition. Refeeding stimulates MLXIPL/ChREBP transcription factor, leading to increased BCKDK to PPM1K expression ratio, phosphorylation and activation of ACLY that ultimately results in the generation of malonyl-CoA and oxaloacetate immediate substrates of de novo lipogenesis and gluconeogenesis, respectively. In Mus musculus (Mouse), this protein is MLX-interacting protein.